A 778-amino-acid polypeptide reads, in one-letter code: DNA topoisomerase 1 (778 aa).

A disordered region spans residues 1–141 (MNSSDEEDIA…ETPEEDQGYK (141 aa)). The span at 17 to 26 (KSSSITSAST) shows a compositional bias: low complexity. Basic and acidic residues-rich tracts occupy residues 71–83 (VKTE…EPKS) and 100–121 (EKTT…ESKT). A compositionally biased stretch (polar residues) spans 122-131 (QSDSQASVKS). Interaction with DNA regions lie at residues 367–368 (KY), 430–435 (RAGGEK), and 522–524 (TAK). Residues 374–778 (NSSVKGQSDF…IESADENWRF (405 aa)) form the Topo IB-type catalytic domain. Tyr-736 serves as the catalytic O-(3'-phospho-DNA)-tyrosine intermediate.

Belongs to the type IB topoisomerase family.

The catalysed reaction is ATP-independent breakage of single-stranded DNA, followed by passage and rejoining.. Releases the supercoiling and torsional tension of DNA introduced during the DNA replication and transcription by transiently cleaving and rejoining one strand of the DNA duplex. Introduces a single-strand break via transesterification at a target site in duplex DNA. The scissile phosphodiester is attacked by the catalytic tyrosine of the enzyme, resulting in the formation of a DNA-(3'-phosphotyrosyl)-enzyme intermediate and the expulsion of a 5'-OH DNA strand. The free DNA strand then rotates around the intact phosphodiester bond on the opposing strand, thus removing DNA supercoils. Finally, in the religation step, the DNA 5'-OH attacks the covalent intermediate to expel the active-site tyrosine and restore the DNA phosphodiester backbone. This chain is DNA topoisomerase 1 (TOP1), found in Candida albicans (Yeast).